Here is a 282-residue protein sequence, read N- to C-terminus: MSNKIIKLGSIEIANDKPFVLFGGMNVLESRDLAMSIAETYAEVTQKLGIPYVFKASFDKANRSSVNSYRGPGMEEGLKIFEEIKKTFNLPLITDVHETYQCAPVAEVVDIIQLPAFLARQTDLVVAMAKTGAIINVKKPQFLAPHEMRHIITKFNEAGNDEIILCERGSCFGYNNLVVDMLGMDEMKQSGYPVIFDATHALQRPGGRADSAGGRRAQATELARSGMALGLAGLFIEAHPDPDNAKCDGPCALPLHQLENYLKQMKAIDDLVKSFEPIDTSK.

The protein belongs to the KdsA family.

It is found in the cytoplasm. It carries out the reaction D-arabinose 5-phosphate + phosphoenolpyruvate + H2O = 3-deoxy-alpha-D-manno-2-octulosonate-8-phosphate + phosphate. It participates in carbohydrate biosynthesis; 3-deoxy-D-manno-octulosonate biosynthesis; 3-deoxy-D-manno-octulosonate from D-ribulose 5-phosphate: step 2/3. It functions in the pathway bacterial outer membrane biogenesis; lipopolysaccharide biosynthesis. The chain is 2-dehydro-3-deoxyphosphooctonate aldolase from Shewanella oneidensis (strain ATCC 700550 / JCM 31522 / CIP 106686 / LMG 19005 / NCIMB 14063 / MR-1).